A 579-amino-acid polypeptide reads, in one-letter code: Protein LYRIC (579 aa).

Over 1–48 (MAARSWQDELAQQAEEGSARLRELLSVGLGFLRTELGLDLGLEPKRYP) the chain is Lumenal. Positions 1–71 (MAARSWQDEL…LLLFLLGYGW (71 aa)) are activation of NF-kappa-B. Residues 49–69 (GWVILVGTGALGLLLLFLLGY) traverse the membrane as a helical segment. The Cytoplasmic segment spans residues 70 to 579 (GWAAACAGAR…KKKKKARRET (510 aa)). The tract at residues 72 to 168 (AAACAGARKK…EKSKKNKKKS (97 aa)) is interaction with BCCIP. Residues 78–222 (ARKKRRSPPR…SGSLDSTIPG (145 aa)) are disordered. Residues 100-204 (DDLAQLKNLR…ISHREKRQQR (105 aa)) form an interaction with RELA region. The span at 108-126 (LRSEEQKKKNRKKLPEKPK) shows a compositional bias: basic and acidic residues. The segment covering 159–168 (EKSKKNKKKS) has biased composition (basic residues). Ser-179 is subject to Phosphoserine. Positions 197-207 (HREKRQQRKRD) are enriched in basic residues. 2 positions are modified to phosphoserine: Ser-215 and Ser-250. Lys-263 carries the post-translational modification N6-acetyllysine. The interval 277 to 579 (NLTVNGGGWS…KKKKKARRET (303 aa)) is disordered. Phosphoserine is present on residues Ser-297, Ser-303, and Ser-308. Residues 317–329 (SAWTQDTGDTNAN) show a composition bias toward polar residues. A phosphoserine mark is found at Ser-341 and Ser-366. 3 stretches are compositionally biased toward polar residues: residues 351 to 369 (EPVS…SRNQ), 380 to 391 (NGLSSADPSSDW), and 410 to 420 (LKSQEPISNDQ). Residues 378–440 (GLNGLSSADP…EGALPTGKSK (63 aa)) are lung-homing for mammary tumors. 2 positions are modified to phosphoserine: Ser-412 and Ser-423. Over residues 421–431 (KVSDDDKEKGE) the composition is skewed to basic and acidic residues. Over residues 438-448 (KSKKKKKKKKK) the composition is skewed to basic residues. The span at 449-470 (QGEDNSHTQDTEDLEKDTREEL) shows a compositional bias: basic and acidic residues. Residues Ser-454, Ser-475, Ser-491, and Ser-493 each carry the phosphoserine modification. Polar residues-rich tracts occupy residues 517–533 (PSIT…SSQV) and 546–565 (NAKQ…NWES). A Phosphoserine modification is found at Ser-565. The span at 568–579 (QIKKKKKARRET) shows a compositional bias: basic residues.

In terms of assembly, interacts with BCCIP, CREBBP/CBP and RELA/p65. In terms of tissue distribution, in the mammary gland, expressed at the apical surface of epithelial cells lining ducts, as well as in the mammary fat pad. Not detected in the spleen, kidney, lung, or skin; minute amounts seen in the liver. Expressed in Purkinje neurons in the early postnatal and adult cerebellum. Overexpressed in mammary tumors (at protein level).

Its subcellular location is the endoplasmic reticulum membrane. The protein resides in the nucleus membrane. It is found in the cell junction. It localises to the tight junction. The protein localises to the nucleus. Its subcellular location is the nucleolus. The protein resides in the cytoplasm. It is found in the perinuclear region. Down-regulates SLC1A2/EAAT2 promoter activity when expressed ectopically. Activates the nuclear factor kappa-B (NF-kappa-B) transcription factor. Promotes anchorage-independent growth of immortalized melanocytes and astrocytes which is a key component in tumor cell expansion. Promotes lung metastasis and also has an effect on bone and brain metastasis, possibly by enhancing the seeding of tumor cells to the target organ endothelium. Induces chemoresistance. This Mus musculus (Mouse) protein is Protein LYRIC (Mtdh).